Consider the following 719-residue polypeptide: Disintegrin and metalloproteinase domain-containing protein 18 (719 aa).

Residues M1–S19 form the signal peptide. Positions E20 to P179 are excised as a propeptide. N61, N75, N121, N152, N173, N244, and N331 each carry an N-linked (GlcNAc...) asparagine glycan. The Extracellular portion of the chain corresponds to N173–S683. A Peptidase M12B domain is found at Q180–S378. 3 cysteine pairs are disulfide-bonded: C289/C373, C332/C357, and C334/C339. N-linked (GlcNAc...) asparagine glycans are attached at residues N356 and N405. The 90-residue stretch at Q387–N476 folds into the Disintegrin domain. A disulfide bridge connects residues C447 and C468. Residues N607, N614, and N621 are each glycosylated (N-linked (GlcNAc...) asparagine). In terms of domain architecture, EGF-like spans T616–N650. Disulfide bonds link C620–C632, C626–C638, and C640–C649. Residues W684–M704 traverse the membrane as a helical segment. At K705–I719 the chain is on the cytoplasmic side.

In terms of processing, the prodomain and the metalloprotease-like domain are cleaved during the epididymal maturation of the spermatozoa. In terms of tissue distribution, expressed specifically in testis.

Its subcellular location is the membrane. Its function is as follows. Sperm surface membrane protein that may be involved in spermatogenesis and fertilization. This is a non catalytic metalloprotease-like protein. This is Disintegrin and metalloproteinase domain-containing protein 18 (Adam18) from Mus musculus (Mouse).